A 246-amino-acid polypeptide reads, in one-letter code: Exosome complex component Rrp41 (246 aa).

Belongs to the RNase PH family. Rrp41 subfamily. In terms of assembly, component of the archaeal exosome complex. Forms a hexameric ring-like arrangement composed of 3 Rrp41-Rrp42 heterodimers. The hexameric ring associates with a trimer of Rrp4 and/or Csl4 subunits.

The protein localises to the cytoplasm. Catalytic component of the exosome, which is a complex involved in RNA degradation. Has 3'-&gt;5' exoribonuclease activity. Can also synthesize heteromeric RNA-tails. This chain is Exosome complex component Rrp41, found in Pyrobaculum islandicum (strain DSM 4184 / JCM 9189 / GEO3).